The primary structure comprises 189 residues: Elongation factor P (189 aa).

Lys-34 carries the N6-(3,6-diaminohexanoyl)-5-hydroxylysine modification.

This sequence belongs to the elongation factor P family. May be beta-lysylated on the epsilon-amino group of Lys-34 by the combined action of EpmA and EpmB, and then hydroxylated on the C5 position of the same residue by EpmC (if this protein is present). Lysylation is critical for the stimulatory effect of EF-P on peptide-bond formation. The lysylation moiety may extend toward the peptidyltransferase center and stabilize the terminal 3-CCA end of the tRNA. Hydroxylation of the C5 position on Lys-34 may allow additional potential stabilizing hydrogen-bond interactions with the P-tRNA.

Its subcellular location is the cytoplasm. Its pathway is protein biosynthesis; polypeptide chain elongation. Functionally, involved in peptide bond synthesis. Alleviates ribosome stalling that occurs when 3 or more consecutive Pro residues or the sequence PPG is present in a protein, possibly by augmenting the peptidyl transferase activity of the ribosome. Modification of Lys-34 is required for alleviation. The sequence is that of Elongation factor P from Alcanivorax borkumensis (strain ATCC 700651 / DSM 11573 / NCIMB 13689 / SK2).